The following is a 333-amino-acid chain: GTPase Obg (333 aa).

The Obg domain occupies 1-158 (MFIDSAKIYV…RNIDLELKLL (158 aa)). A disordered region spans residues 121 to 143 (HGGKGNQHFATPTNRAPRYSEPA). Positions 159–323 (ADIGLVGFPN…LKDVLWRIIQ (165 aa)) constitute an OBG-type G domain. GTP contacts are provided by residues 165–172 (GFPNAGKS), 190–194 (FTTLE), 212–215 (DIPG), 279–282 (SKMD), and 304–306 (SSV). Residues S172 and T192 each contribute to the Mg(2+) site.

The protein belongs to the TRAFAC class OBG-HflX-like GTPase superfamily. OBG GTPase family. As to quaternary structure, monomer. Mg(2+) serves as cofactor.

Its subcellular location is the cytoplasm. In terms of biological role, an essential GTPase which binds GTP, GDP and possibly (p)ppGpp with moderate affinity, with high nucleotide exchange rates and a fairly low GTP hydrolysis rate. Plays a role in control of the cell cycle, stress response, ribosome biogenesis and in those bacteria that undergo differentiation, in morphogenesis control. This is GTPase Obg from Chloroherpeton thalassium (strain ATCC 35110 / GB-78).